A 182-amino-acid chain; its full sequence is MPTPKKGARLGGSASHQKKILSNLAAQLFEHGAIKTTDAKAKLLRPYVEKIITKAKRGTLADRRNVLKLIPNKEVVAYLFNELAPKFEGRPGGYTRIIKLENRKGDNAPISQISLVTEQLASTEAERANRVAASKAKKAEAEAAEAKAEEAEEAPEVEADTATDKAAEAEAAEAADEAAEDK.

Residues 126-182 form a disordered region; that stretch reads ERANRVAASKAKKAEAEAAEAKAEEAEEAPEVEADTATDKAAEAEAAEAADEAAEDK. The span at 137 to 149 shows a compositional bias: basic and acidic residues; sequence KKAEAEAAEAKAE. Composition is skewed to acidic residues over residues 150–161 and 170–182; these read EAEEAPEVEADT and EAAEAADEAAEDK.

This sequence belongs to the bacterial ribosomal protein bL17 family. Part of the 50S ribosomal subunit. Contacts protein L32.

The protein is Large ribosomal subunit protein bL17 of Corynebacterium jeikeium (strain K411).